Consider the following 234-residue polypeptide: CHD1 helical C-terminal domain containing protein 1 (234 aa).

The tract at residues 1–38 is disordered; the sequence is MEASDGQADEREEPLEQGTNARSLERRSSTTPAKDSLV. The tract at residues 44-145 is CHD1 helical C-terminal domain (CHCT); it reads LDRDTFKICK…NNQTTKFLMA (102 aa). The tract at residues 200–234 is disordered; that stretch reads LRARGPRRRGSKLPQEPKLKRRRIKEAPDTPETCL.

The protein localises to the cytoplasm. It localises to the nucleus. Functionally, may play a role in regulation of apoptosis. The chain is CHD1 helical C-terminal domain containing protein 1 (CHCT1) from Bos taurus (Bovine).